The following is a 78-amino-acid chain: Beta sliding clamp (78 aa).

This sequence belongs to the beta sliding clamp family. As to quaternary structure, forms a ring-shaped head-to-tail homodimer around DNA which binds and tethers DNA polymerases and other proteins to the DNA. The DNA replisome complex has a single clamp-loading complex (3 tau and 1 each of delta, delta', psi and chi subunits) which binds 3 Pol III cores (1 core on the leading strand and 2 on the lagging strand) each with a beta sliding clamp dimer. Additional proteins in the replisome are other copies of gamma, psi and chi, Ssb, DNA helicase and RNA primase.

The protein resides in the cytoplasm. Confers DNA tethering and processivity to DNA polymerases and other proteins. Acts as a clamp, forming a ring around DNA (a reaction catalyzed by the clamp-loading complex) which diffuses in an ATP-independent manner freely and bidirectionally along dsDNA. Initially characterized for its ability to contact the catalytic subunit of DNA polymerase III (Pol III), a complex, multichain enzyme responsible for most of the replicative synthesis in bacteria; Pol III exhibits 3'-5' exonuclease proofreading activity. The beta chain is required for initiation of replication as well as for processivity of DNA replication. The chain is Beta sliding clamp (dnaN) from Serratia marcescens.